The primary structure comprises 251 residues: Pyrroloquinoline-quinone synthase (251 aa).

This sequence belongs to the PqqC family.

The enzyme catalyses 6-(2-amino-2-carboxyethyl)-7,8-dioxo-1,2,3,4,7,8-hexahydroquinoline-2,4-dicarboxylate + 3 O2 = pyrroloquinoline quinone + 2 H2O2 + 2 H2O + H(+). The protein operates within cofactor biosynthesis; pyrroloquinoline quinone biosynthesis. Its function is as follows. Ring cyclization and eight-electron oxidation of 3a-(2-amino-2-carboxyethyl)-4,5-dioxo-4,5,6,7,8,9-hexahydroquinoline-7,9-dicarboxylic-acid to PQQ. This Pseudomonas syringae pv. syringae (strain B728a) protein is Pyrroloquinoline-quinone synthase.